The following is a 539-amino-acid chain: UDP-N-acetylmuramate--L-alanine ligase (539 aa).

Residue 165–171 (GTHGKTT) participates in ATP binding.

It belongs to the MurCDEF family.

It localises to the cytoplasm. It carries out the reaction UDP-N-acetyl-alpha-D-muramate + L-alanine + ATP = UDP-N-acetyl-alpha-D-muramoyl-L-alanine + ADP + phosphate + H(+). The protein operates within cell wall biogenesis; peptidoglycan biosynthesis. In terms of biological role, cell wall formation. In Trichodesmium erythraeum (strain IMS101), this protein is UDP-N-acetylmuramate--L-alanine ligase.